Consider the following 59-residue polypeptide: MAFDKKLLDIVACPVCKGKLEYDKVAQQLICKADKLAYPITDGIPVLLENRALPLTESV.

The protein belongs to the UPF0434 family.

This Shewanella oneidensis (strain ATCC 700550 / JCM 31522 / CIP 106686 / LMG 19005 / NCIMB 14063 / MR-1) protein is UPF0434 protein SO_2800.